A 262-amino-acid polypeptide reads, in one-letter code: Hydroxyethylthiazole kinase (262 aa).

Residue Met50 coordinates substrate. Positions 125 and 171 each coordinate ATP. Gly198 contributes to the substrate binding site.

The protein belongs to the Thz kinase family. The cofactor is Mg(2+).

It carries out the reaction 5-(2-hydroxyethyl)-4-methylthiazole + ATP = 4-methyl-5-(2-phosphooxyethyl)-thiazole + ADP + H(+). It participates in cofactor biosynthesis; thiamine diphosphate biosynthesis; 4-methyl-5-(2-phosphoethyl)-thiazole from 5-(2-hydroxyethyl)-4-methylthiazole: step 1/1. Its function is as follows. Catalyzes the phosphorylation of the hydroxyl group of 4-methyl-5-beta-hydroxyethylthiazole (THZ). The protein is Hydroxyethylthiazole kinase of Shigella boydii serotype 18 (strain CDC 3083-94 / BS512).